A 433-amino-acid polypeptide reads, in one-letter code: MATLFHLIDVHGNEYQNVQDHSLQMALEELNQQIEVIQRQEEQLALRKKAIEDARQEVLQQIQHRKFRQYLHEREQEARLQEYYLEQLQERRAFENVVRTIIRKRFEDEERERAHRREKAARKLLRRILVSDSPNMQLVVPNNFQQMFIHHPVVDTIYSPEESSESQAEVADQQTGPYSTSEYAGAQQSQPFRIFIQNDNAPEQQSGPDVAELNTLPNRSKTSSQASVSDEELSRTELAELNDYLLAAQRRSNKRGNARKHIDLTARESPSTSFAQMSKGALNPDPEVIEPEDEPTTFRNPLEALLSTGQYSVVSSDEDVESVRDPDDGTLPIHSTQTVEEPIDTKAGEKLTDSSKQPSPPVAEHFSNETFSASPKGAETDVKSEGSNNHEQGSFNEPKSNVDSNDSASPKRPSSQASLRHNVTVEEVPDEDA.

Disordered stretches follow at residues 159–184 (SPEE…SEYA), 200–234 (NAPE…EELS), and 252–433 (SNKR…DEDA). 2 stretches are compositionally biased toward polar residues: residues 172–184 (DQQT…SEYA) and 215–228 (TLPN…QASV). Phosphoserine is present on residues Ser-227, Ser-229, and Ser-269. Positions 343 to 353 (IDTKAGEKLTD) are enriched in basic and acidic residues. Residues 385-421 (EGSNNHEQGSFNEPKSNVDSNDSASPKRPSSQASLRH) are compositionally biased toward polar residues. Residues Ser-409, Ser-415, and Ser-418 each carry the phosphoserine modification.

This chain is Protein slt1 (slt1), found in Schizosaccharomyces pombe (strain 972 / ATCC 24843) (Fission yeast).